Consider the following 47-residue polypeptide: Photosystem II reaction center protein K (47 aa).

The propeptide occupies 1 to 10 (MALINFDLLA). The chain crosses the membrane as a helical span at residues 26–46 (LPLIPLFFFLLVFVWQAAVGF).

It belongs to the PsbK family. PSII is composed of 1 copy each of membrane proteins PsbA, PsbB, PsbC, PsbD, PsbE, PsbF, PsbH, PsbI, PsbJ, PsbK, PsbL, PsbM, PsbT, PsbX, PsbY, Psb30/Ycf12, peripheral proteins PsbO, CyanoQ (PsbQ), PsbU, PsbV and a large number of cofactors. It forms dimeric complexes.

Its subcellular location is the cellular thylakoid membrane. Its function is as follows. One of the components of the core complex of photosystem II (PSII). PSII is a light-driven water:plastoquinone oxidoreductase that uses light energy to abstract electrons from H(2)O, generating O(2) and a proton gradient subsequently used for ATP formation. It consists of a core antenna complex that captures photons, and an electron transfer chain that converts photonic excitation into a charge separation. The chain is Photosystem II reaction center protein K from Prochlorococcus marinus (strain NATL2A).